The following is a 362-amino-acid chain: UDP-N-acetylglucosamine--N-acetylmuramyl-(pentapeptide) pyrophosphoryl-undecaprenol N-acetylglucosamine transferase (362 aa).

UDP-N-acetyl-alpha-D-glucosamine-binding positions include 10-12 (TAG), Asn124, Arg161, Ser195, and Gln291.

Belongs to the glycosyltransferase 28 family. MurG subfamily.

The protein resides in the cell membrane. It catalyses the reaction di-trans,octa-cis-undecaprenyl diphospho-N-acetyl-alpha-D-muramoyl-L-alanyl-D-glutamyl-meso-2,6-diaminopimeloyl-D-alanyl-D-alanine + UDP-N-acetyl-alpha-D-glucosamine = di-trans,octa-cis-undecaprenyl diphospho-[N-acetyl-alpha-D-glucosaminyl-(1-&gt;4)]-N-acetyl-alpha-D-muramoyl-L-alanyl-D-glutamyl-meso-2,6-diaminopimeloyl-D-alanyl-D-alanine + UDP + H(+). It functions in the pathway cell wall biogenesis; peptidoglycan biosynthesis. In terms of biological role, cell wall formation. Catalyzes the transfer of a GlcNAc subunit on undecaprenyl-pyrophosphoryl-MurNAc-pentapeptide (lipid intermediate I) to form undecaprenyl-pyrophosphoryl-MurNAc-(pentapeptide)GlcNAc (lipid intermediate II). The protein is UDP-N-acetylglucosamine--N-acetylmuramyl-(pentapeptide) pyrophosphoryl-undecaprenol N-acetylglucosamine transferase of Streptomyces collinus.